A 465-amino-acid chain; its full sequence is Cysteine--tRNA ligase (465 aa).

Cys-27 contacts Zn(2+). Positions Pro-29–His-39 match the 'HIGH' region motif. Residues Cys-207, His-237, and Glu-241 each coordinate Zn(2+). A 'KMSKS' region motif is present at residues Lys-269–Ser-273. Lys-272 is an ATP binding site.

The protein belongs to the class-I aminoacyl-tRNA synthetase family. Monomer. Zn(2+) is required as a cofactor.

The protein resides in the cytoplasm. It carries out the reaction tRNA(Cys) + L-cysteine + ATP = L-cysteinyl-tRNA(Cys) + AMP + diphosphate. The chain is Cysteine--tRNA ligase (cysS) from Helicobacter pylori (strain ATCC 700392 / 26695) (Campylobacter pylori).